A 499-amino-acid polypeptide reads, in one-letter code: Lysine--tRNA ligase (499 aa).

Positions 408 and 415 each coordinate Mg(2+).

It belongs to the class-II aminoacyl-tRNA synthetase family. In terms of assembly, homodimer. Requires Mg(2+) as cofactor.

The protein localises to the cytoplasm. It catalyses the reaction tRNA(Lys) + L-lysine + ATP = L-lysyl-tRNA(Lys) + AMP + diphosphate. In Bacillus thuringiensis (strain Al Hakam), this protein is Lysine--tRNA ligase.